Reading from the N-terminus, the 301-residue chain is Triplex capsid protein 2 (301 aa).

Belongs to the herpesviridae TRX2 protein family. Interacts with TRX1 and major capisd protein/MCP.

It localises to the virion. The protein resides in the host nucleus. Its function is as follows. Structural component of the T=16 icosahedral capsid. The capsid is composed of pentamers and hexamers of major capsid protein/MCP, which are linked together by heterotrimers called triplexes. These triplexes are formed by a single molecule of triplex protein 1/TRX1 and two copies of triplex protein 2/TRX2. Additionally, TRX1 is required for efficient transport of TRX2 to the nucleus, which is the site of capsid assembly. The polypeptide is Triplex capsid protein 2 (Homo sapiens (Human)).